The primary structure comprises 942 residues: DNA mismatch repair protein MSH2 (942 aa).

667 to 674 (GPNMGGKS) contributes to the ATP binding site.

Belongs to the DNA mismatch repair MutS family. Heterodimer of MSH2 and MSH6 (GTBP).

The protein localises to the nucleus. Its function is as follows. Involved in postreplication mismatch repair. Binds specifically to DNA containing mismatched nucleotides thus providing a target for the excision repair processes characteristic of postreplication mismatch repair. The chain is DNA mismatch repair protein MSH2 (MUS1) from Zea mays (Maize).